The sequence spans 333 residues: MARHSFFCVDGHTCGNPVRLVAGGGPNLNGSTMMEKRAHFLAEYDWIRTGLMFEPRGHDMMSGSILYPPTRPDCDVAVLFIETSGCLPMCGHGTIGTVTMAIEQGLVTPKTPGKLNLDTPAGLVAIEYEQDGQYVERVRLTNVPAFLYAEGLEVECPDLGPIKVDVAYGGNFYAIVEPQENYTDMDDYSALQLIAWSPVLRQRLNEKYKFQHPELPDINRLSHILWTGKPEHPQAHARNAVFYGDKAIDRSPCGTGTSARMAQLAAKGKLKPGDEFIHESIIGSLFHGRVERAAEVAGRPAIVPSIAGWARMTGYNTIFIDDRDPFAHGFSVA.

Cys-90 (proton acceptor) is an active-site residue. Substrate is bound by residues 91 to 92 (GH) and Asp-249. Cys-253 serves as the catalytic Proton donor. 254 to 255 (GT) lines the substrate pocket.

It belongs to the proline racemase family. In terms of assembly, homodimer.

The enzyme catalyses trans-4-hydroxy-L-proline = cis-4-hydroxy-D-proline. Functionally, allows intracellular utilization of 4-hydroxyproline, one of the major constituents of host collagen, by converting 4-hydroxy-L-proline to 4-hydroxy-D-proline, which can be further metabolized by intracellular 4-hydroxy-D-proline oxidases. Strong B-cell mitogen. Plays an important role in the regulation of intra- and extracellular amino acid pools, allowing the bacterium to profit from host precursors and enzymatic pathways. This chain is 4-hydroxyproline epimerase, found in Brucella suis (strain ATCC 23445 / NCTC 10510).